Reading from the N-terminus, the 222-residue chain is Cytidylate kinase (222 aa).

Glycine 7–threonine 15 lines the ATP pocket.

This sequence belongs to the cytidylate kinase family. Type 1 subfamily.

Its subcellular location is the cytoplasm. It carries out the reaction CMP + ATP = CDP + ADP. It catalyses the reaction dCMP + ATP = dCDP + ADP. This is Cytidylate kinase from Aquifex aeolicus (strain VF5).